A 377-amino-acid polypeptide reads, in one-letter code: Opsin, blue-sensitive (377 aa).

Topologically, residues 1–56 (MLLHNKTLAGKALAFIAEEGYVPSMREKFLGWNVPPEYSDLVHPHWRAFPAPGKHF) are extracellular. A glycan (N-linked (GlcNAc...) asparagine) is linked at Asn-5. Residues 57 to 81 (HIGLAIIYSMLLIMSLVGNCCVIWI) form a helical membrane-spanning segment. Residues 82–93 (FSTSKSLRTPSN) lie on the Cytoplasmic side of the membrane. The helical transmembrane segment at 94–119 (MFIVSLAIFDIIMAFEMPMLVISSFM) threads the bilayer. Residues 120-132 (ERMIGWEIGCDVY) are Extracellular-facing. Cys-129 and Cys-206 are joined by a disulfide. The helical transmembrane segment at 133 to 152 (SVFGSISGMGQAMTNAAIAF) threads the bilayer. Residues 153 to 170 (DRYRTISCPIDGRLNSKQ) lie on the Cytoplasmic side of the membrane. The chain crosses the membrane as a helical span at residues 171 to 195 (AAVIIAFTWFWVTPFTVLPLLKVWG). The Extracellular portion of the chain corresponds to 196–219 (RYTTEGFLTTCSFDFLTDDEDTKV). The chain crosses the membrane as a helical span at residues 220–247 (FVTCIFIWAYVIPLIFIILFYSRLLSSI). Residues 248–282 (RNHEKMLREQAKKMNVKSLVSNQDKERSAEVRIAK) lie on the Cytoplasmic side of the membrane. Residues 283 to 306 (VAFTIFFLFLLAWTPYATVALIGV) form a helical membrane-spanning segment. The Extracellular segment spans residues 307–314 (YGNRELLT). The chain crosses the membrane as a helical span at residues 315–339 (PVSTMLPAVFAKTVSCIDPWIYAIN). The residue at position 326 (Lys-326) is an N6-(retinylidene)lysine. At 340–377 (HPRYRQELQKRCKWMGIHEPETTSDATSAQTEKIKTDE) the chain is on the cytoplasmic side.

This sequence belongs to the G-protein coupled receptor 1 family. Opsin subfamily. Post-translationally, phosphorylated on some or all of the serine and threonine residues present in the C-terminal region. As to expression, expressed in the dorsal region of the retina and sparsely expressed in the ventral region.

The protein localises to the membrane. In terms of biological role, visual pigments are the light-absorbing molecules that mediate vision. They consist of an apoprotein, opsin, covalently linked to 11-cis-retinal. The polypeptide is Opsin, blue-sensitive (BLOP) (Apis mellifera (Honeybee)).